Here is a 92-residue protein sequence, read N- to C-terminus: CRISPR-associated endoribonuclease Cas2 2 (92 aa).

Asp-12 is a Mg(2+) binding site.

The protein belongs to the CRISPR-associated endoribonuclease Cas2 protein family. Homodimer, forms a heterotetramer with a Cas1 homodimer. It depends on Mg(2+) as a cofactor.

CRISPR (clustered regularly interspaced short palindromic repeat), is an adaptive immune system that provides protection against mobile genetic elements (viruses, transposable elements and conjugative plasmids). CRISPR clusters contain sequences complementary to antecedent mobile elements and target invading nucleic acids. CRISPR clusters are transcribed and processed into CRISPR RNA (crRNA). Functions as a ssRNA-specific endoribonuclease. Involved in the integration of spacer DNA into the CRISPR cassette. In Archaeoglobus fulgidus (strain ATCC 49558 / DSM 4304 / JCM 9628 / NBRC 100126 / VC-16), this protein is CRISPR-associated endoribonuclease Cas2 2 (cas22).